We begin with the raw amino-acid sequence, 135 residues long: Snaclec rhodocetin subunit gamma (135 aa).

Cystine bridges form between C4/C15, C32/C129, and C104/C121. A C-type lectin domain is found at 11–130; the sequence is YDQHCYQAFN…CQAKNPFVCK (120 aa).

This sequence belongs to the snaclec family. As to quaternary structure, heterotetramer of subunit alpha, beta, gamma and delta; only the gamma and the delta subunits are disulfide-linked. Alpha-beta heterodimer and gamma-delta heterodimer associate orthogonally, giving a cruciform conformation. This heterotetramer may covalently dimerizes thanks to the gamma subunit. Expressed by the venom gland.

The protein localises to the secreted. Its function is as follows. Potent inhibitor of collagen-induced platelet aggregation. It acts by binding to the integrin alpha2A domain and blocks collagen binding to integrin alpha-2/beta-1 (ITGA2/ITGB1). The gamma/delta subunits mainly contribute to this activity. The sequence is that of Snaclec rhodocetin subunit gamma from Calloselasma rhodostoma (Malayan pit viper).